The primary structure comprises 282 residues: 3-methyl-2-oxobutanoate hydroxymethyltransferase (282 aa).

2 residues coordinate Mg(2+): aspartate 63 and aspartate 102. Residues 63 to 64, aspartate 102, and lysine 132 contribute to the 3-methyl-2-oxobutanoate site; that span reads DS. Position 134 (glutamate 134) interacts with Mg(2+). Glutamate 200 serves as the catalytic Proton acceptor.

Belongs to the PanB family. Homodecamer; pentamer of dimers. Requires Mg(2+) as cofactor.

The protein localises to the cytoplasm. The enzyme catalyses 3-methyl-2-oxobutanoate + (6R)-5,10-methylene-5,6,7,8-tetrahydrofolate + H2O = 2-dehydropantoate + (6S)-5,6,7,8-tetrahydrofolate. It functions in the pathway cofactor biosynthesis; (R)-pantothenate biosynthesis; (R)-pantoate from 3-methyl-2-oxobutanoate: step 1/2. Its function is as follows. Catalyzes the reversible reaction in which hydroxymethyl group from 5,10-methylenetetrahydrofolate is transferred onto alpha-ketoisovalerate to form ketopantoate. The chain is 3-methyl-2-oxobutanoate hydroxymethyltransferase from Mycobacterium sp. (strain JLS).